The sequence spans 1373 residues: MKSGSGGGSPTSLWGLVFLSAALSLWPTSGEICGPGIDIRNDYQQLKRLENCTVIEGFLHILLISKAEDYRSYRFPKLTVITEYLLLFRVAGLESLGDLFPNLTVIRGWKLFYNYALVIFEMTNLKDIGLYNLRNITRGAIRIEKNADLCYLSTIDWSLILDAVSNNYIVGNKPPKECGDLCPGTLEEKPMCEKTTINNEYNYRCWTTNRCQKMCPSVCGKRACTENNECCHPECLGSCHTPDDNTTCVACRHYYYKGVCVPACPPGTYRFEGWRCVDRDFCANIPNAESSDSDGFVIHDDECMQECPSGFIRNSTQSMYCIPCEGPCPKVCGDEEKKTKTIDSVTSAQMLQGCTILKGNLLINIRRGNNIASELENFMGLIEVVTGYVKIRHSHALVSLSFLKNLRLILGEEQLEGNYSFYVLDNQNLQQLWDWNHRNLTVRSGKMYFAFNPKLCVSEIYRMEEVTGTKGRQSKGDINTRNNGERASCESDVLRFTSTTTWKNRIIITWHRYRPPDYRDLISFTVYYKEAPFKNVTEYDGQDACGSNSWNMVDVDLPPNKEGEPGILLHGLKPWTQYAVYVKAVTLTMVENDHIRGAKSEILYIRTNASVPSIPLDVLSASNSSSQLIVKWNPPTLPNGNLSYYIVRWQRQPQDGYLYRHNYCSKDKIPIRKYADGTIDVEEVTENPKTEVCGGDKGPCCACPKTEAEKQAEKEEAEYRKVFENFLHNSIFVPRPERRRRDVMQVANTTMSSRSRNTTVADTYNITDPEEFETEYPFFESRVDNKERTVISNLRPFTLYRIDIHSCNHEAEKLGCSASNFVFARTMPAEGADDIPGPVTWEPRPENSIFLKWPEPENPNGLILMYEIKYGSQVEDQRECVSRQEYRKYGGAKLNRLNPGNYTARIQATSLSGNGSWTDPVFFYVPAKTTYENFMHLIIALPVAILLIVGGLVIMLYVFHRKRNNSRLGNGVLYASVNPEYFSAADVYVPDEWEVAREKITMNRELGQGSFGMVYEGVAKGVVKDEPETRVAIKTVNEAASMRERIEFLNEASVMKEFNCHHVVRLLGVVSQGQPTLVIMELMTRGDLKSYLRSLRPEVEQNNLVLIPPSLSKMIQMAGEIADGMAYLNANKFVHRDLAARNCMVAEDFTVKIGDFGMTRDIYETDYYRKGGKGLLPVRWMSPESLKDGVFTTHSDVWSFGVVLWEIATLAEQPYQGLSNEQVLRFVMEGGLLDKPDNCPDMLFELMRMCWQYNPKMRPSFLEIIGSIKDEMEPSFQEVSFYYSEENKPPEPEELEMELEMEPENMESVPLDPSASSASLPLPERHSGHKAENGPGPGVLVLRASFDERQPYAHMNGGRANERALPLPQSSTC.

An N-terminal signal peptide occupies residues 1–30; it reads MKSGSGGGSPTSLWGLVFLSAALSLWPTSG. Cysteines 33 and 52 form a disulfide. N-linked (GlcNAc...) asparagine glycans are attached at residues Asn-51, Asn-102, and Asn-135. 13 disulfide bridges follow: Cys-150–Cys-178, Cys-182–Cys-205, Cys-192–Cys-211, Cys-215–Cys-224, Cys-219–Cys-230, Cys-231–Cys-239, Cys-235–Cys-248, Cys-251–Cys-260, Cys-264–Cys-276, Cys-282–Cys-303, Cys-307–Cys-321, Cys-324–Cys-328, and Cys-332–Cys-354. Asn-245 is a glycosylation site (N-linked (GlcNAc...) asparagine). Asn-314 carries N-linked (GlcNAc...) asparagine glycosylation. 2 N-linked (GlcNAc...) asparagine glycosylation sites follow: Asn-418 and Asn-439. A disulfide bridge connects residues Cys-456 and Cys-489. Fibronectin type-III domains follow at residues 490-610, 611-709, 735-829, and 835-928; these read ESDV…TNAS, VPSI…TEAE, RPER…TMPA, and IPGP…VPAK. Asn-535, Asn-608, Asn-623, Asn-641, Asn-748, Asn-757, Asn-765, Asn-901, and Asn-914 each carry an N-linked (GlcNAc...) asparagine glycan. The Extracellular portion of the chain corresponds to 742–936; that stretch reads DVMQVANTTM…AKTTYENFMH (195 aa). A helical transmembrane segment spans residues 937-960; the sequence is LIIALPVAILLIVGGLVIMLYVFH. Over 961–1373 the chain is Cytoplasmic; it reads RKRNNSRLGN…ALPLPQSSTC (413 aa). The IRS1- and SHC1-binding motif lies at 978-981; sequence NPEY. Phosphotyrosine is present on Tyr-981. In terms of domain architecture, Protein kinase spans 1000–1276; it reads ITMNRELGQG…SIKDEMEPSF (277 aa). ATP contacts are provided by residues 1006-1014 and Lys-1034; that span reads LGQGSFGMV. Asp-1137 (proton acceptor) is an active-site residue. A phosphotyrosine; by autocatalysis mark is found at Tyr-1163, Tyr-1167, and Tyr-1168. Glycyl lysine isopeptide (Lys-Gly) (interchain with G-Cter in ubiquitin) cross-links involve residues Lys-1170 and Lys-1173. A Phosphoserine; by GSK3-beta modification is found at Ser-1280. The interval 1283–1373 is disordered; sequence YSEENKPPEP…ALPLPQSSTC (91 aa). Ser-1284 carries the post-translational modification Phosphoserine. The segment covering 1292-1305 has biased composition (acidic residues); it reads PEELEMELEMEPEN. Residues 1306–1322 show a composition bias toward low complexity; that stretch reads MESVPLDPSASSASLPL. Over residues 1323–1332 the composition is skewed to basic and acidic residues; sequence PERHSGHKAE.

This sequence belongs to the protein kinase superfamily. Tyr protein kinase family. Insulin receptor subfamily. As to quaternary structure, tetramer of 2 alpha and 2 beta chains linked by disulfide bonds. The alpha chains contribute to the formation of the ligand-binding domain, while the beta chain carries the kinase domain. Interacts with PIK3R1 and with the PTB/PID domains of IRS1 and SHC1 in vitro when autophosphorylated on tyrosine residues. Forms a hybrid receptor with INSR, the hybrid is a tetramer consisting of 1 alpha chain and 1 beta chain of INSR and 1 alpha chain and 1 beta chain of IGF1R. Interacts with ARRB1 and ARRB2. Interacts with GRB10. Interacts with RACK1. Interacts with SOCS1, SOCS2 and SOCS3. Interacts with 14-3-3 proteins. Interacts with NMD2. Interacts with MAP3K5. Interacts with STAT3. Found in a ternary complex with IGF1 and ITGAV:ITGB3 or ITGA6:ITGB4. Interacts (nascent precursor form) with ZFAND2B. In terms of processing, autophosphorylated on tyrosine residues in response to ligand binding. Autophosphorylation occurs in trans, i.e. one subunit of the dimeric receptor phosphorylates tyrosine residues on the other subunit. Autophosphorylation occurs in a sequential manner; Tyr-1167 is predominantly phosphorylated first, followed by phosphorylation of Tyr-1163 and Tyr-1168. While every single phosphorylation increases kinase activity, all three tyrosine residues in the kinase activation loop (Tyr-1163, Tyr-1167 and Tyr-1168) have to be phosphorylated for optimal activity. Can be autophosphorylated at additional tyrosine residues (in vitro). Autophosphorylated is followed by phosphorylation of juxtamembrane tyrosines and C-terminal serines. May also be phosphorylated at Tyr-1163 and Tyr-1168 by mTORC2. Phosphorylation of Tyr-981 is required for IRS1- and SHC1-binding. Phosphorylation of Ser-1280 by GSK-3beta restrains kinase activity and promotes cell surface expression, it requires a priming phosphorylation at Ser-1284. Dephosphorylated by PTPN1. Polyubiquitinated at Lys-1170 and Lys-1173 through both 'Lys-48' and 'Lys-29' linkages, promoting receptor endocytosis and subsequent degradation by the proteasome. Ubiquitination is facilitated by pre-existing phosphorylation. Post-translationally, sumoylated with SUMO1. In terms of processing, controlled by regulated intramembrane proteolysis (RIP). Undergoes metalloprotease-dependent constitutive ectodomain shedding to produce a membrane-anchored 52 kDa C-Terminal fragment which is further processed by presenilin gamma-secretase to yield an intracellular 50 kDa fragment.

The protein localises to the cell membrane. It carries out the reaction L-tyrosyl-[protein] + ATP = O-phospho-L-tyrosyl-[protein] + ADP + H(+). With respect to regulation, activated by autophosphorylation at Tyr-1163, Tyr-1167 and Tyr-1168 on the kinase activation loop; phosphorylation at all three tyrosine residues is required for optimal kinase activity. Inhibited by MSC1609119A-1, BMS-754807, PQIP, benzimidazole pyridinone, isoquinolinedione, bis-azaindole, 3-cyanoquinoline, 2,4-bis-arylamino-1,3-pyrimidine, pyrrolopyrimidine, pyrrole-5-carboxaldehyde, picropodophyllin (PPP), tyrphostin derivatives. While most inhibitors bind to the ATP binding pocket, MSC1609119A-1 functions as allosteric inhibitor and binds close to the DFG motif and the activation loop. Receptor tyrosine kinase which mediates actions of insulin-like growth factor 1 (IGF1). Binds IGF1 with high affinity and IGF2 and insulin (INS) with a lower affinity. The activated IGF1R is involved in cell growth and survival control. IGF1R is crucial for tumor transformation and survival of malignant cell. Ligand binding activates the receptor kinase, leading to receptor autophosphorylation, and tyrosines phosphorylation of multiple substrates, that function as signaling adapter proteins including, the insulin-receptor substrates (IRS1/2), Shc and 14-3-3 proteins. Phosphorylation of IRSs proteins lead to the activation of two main signaling pathways: the PI3K-AKT/PKB pathway and the Ras-MAPK pathway. The result of activating the MAPK pathway is increased cellular proliferation, whereas activating the PI3K pathway inhibits apoptosis and stimulates protein synthesis. Phosphorylated IRS1 can activate the 85 kDa regulatory subunit of PI3K (PIK3R1), leading to activation of several downstream substrates, including protein AKT/PKB. AKT phosphorylation, in turn, enhances protein synthesis through mTOR activation and triggers the antiapoptotic effects of IGFIR through phosphorylation and inactivation of BAD. In parallel to PI3K-driven signaling, recruitment of Grb2/SOS by phosphorylated IRS1 or Shc leads to recruitment of Ras and activation of the ras-MAPK pathway. In addition to these two main signaling pathways IGF1R signals also through the Janus kinase/signal transducer and activator of transcription pathway (JAK/STAT). Phosphorylation of JAK proteins can lead to phosphorylation/activation of signal transducers and activators of transcription (STAT) proteins. In particular activation of STAT3, may be essential for the transforming activity of IGF1R. The JAK/STAT pathway activates gene transcription and may be responsible for the transforming activity. JNK kinases can also be activated by the IGF1R. IGF1 exerts inhibiting activities on JNK activation via phosphorylation and inhibition of MAP3K5/ASK1, which is able to directly associate with the IGF1R. When present in a hybrid receptor with INSR, binds IGF1. The chain is Insulin-like growth factor 1 receptor (Igf1r) from Mus musculus (Mouse).